We begin with the raw amino-acid sequence, 460 residues long: L-seryl-tRNA(Sec) selenium transferase (460 aa).

K293 is modified (N6-(pyridoxal phosphate)lysine).

Belongs to the SelA family. Pyridoxal 5'-phosphate is required as a cofactor.

Its subcellular location is the cytoplasm. The catalysed reaction is L-seryl-tRNA(Sec) + selenophosphate + H(+) = L-selenocysteinyl-tRNA(Sec) + phosphate. It functions in the pathway aminoacyl-tRNA biosynthesis; selenocysteinyl-tRNA(Sec) biosynthesis; selenocysteinyl-tRNA(Sec) from L-seryl-tRNA(Sec) (bacterial route): step 1/1. Functionally, converts seryl-tRNA(Sec) to selenocysteinyl-tRNA(Sec) required for selenoprotein biosynthesis. This chain is L-seryl-tRNA(Sec) selenium transferase, found in Pasteurella multocida (strain Pm70).